A 151-amino-acid chain; its full sequence is Lipoprotein signal peptidase (151 aa).

The next 2 helical transmembrane spans lie at 54–74 (GQMW…IYLI) and 83–103 (LLKI…IDRL). Active-site residues include aspartate 110 and aspartate 125. A helical transmembrane segment spans residues 120 to 140 (IFNIADSALTIGVGLFLLNIL).

It belongs to the peptidase A8 family.

The protein localises to the cell membrane. It carries out the reaction Release of signal peptides from bacterial membrane prolipoproteins. Hydrolyzes -Xaa-Yaa-Zaa-|-(S,diacylglyceryl)Cys-, in which Xaa is hydrophobic (preferably Leu), and Yaa (Ala or Ser) and Zaa (Gly or Ala) have small, neutral side chains.. The protein operates within protein modification; lipoprotein biosynthesis (signal peptide cleavage). Functionally, this protein specifically catalyzes the removal of signal peptides from prolipoproteins. This chain is Lipoprotein signal peptidase, found in Shouchella clausii (strain KSM-K16) (Alkalihalobacillus clausii).